The primary structure comprises 97 residues: Cobalt transport protein CbiN (97 aa).

A run of 2 helical transmembrane segments spans residues 6–26 (VLMI…YSGL) and 68–88 (SLLF…FFGY).

Belongs to the CbiN family. In terms of assembly, forms an energy-coupling factor (ECF) transporter complex composed of an ATP-binding protein (A component, CbiO), a transmembrane protein (T component, CbiQ) and 2 possible substrate-capture proteins (S components, CbiM and CbiN) of unknown stoichimetry.

It is found in the cell membrane. The protein operates within cofactor biosynthesis; adenosylcobalamin biosynthesis. Functionally, part of the energy-coupling factor (ECF) transporter complex CbiMNOQ involved in cobalt import. The polypeptide is Cobalt transport protein CbiN (Methanococcus maripaludis (strain C6 / ATCC BAA-1332)).